A 68-amino-acid polypeptide reads, in one-letter code: Small ribosomal subunit protein bS21 (68 aa).

This sequence belongs to the bacterial ribosomal protein bS21 family.

This chain is Small ribosomal subunit protein bS21, found in Jannaschia sp. (strain CCS1).